Consider the following 258-residue polypeptide: Global transcriptional regulator CodY (258 aa).

Residues 1-156 (MSSLLSKTRR…SATIVGMEML (156 aa)) are GAF domain. The segment at residues 204–223 (ASKIADKVGITRSVIVNALR) is a DNA-binding region (H-T-H motif).

It belongs to the CodY family.

It localises to the cytoplasm. Functionally, DNA-binding global transcriptional regulator which is involved in the adaptive response to starvation and acts by directly or indirectly controlling the expression of numerous genes in response to nutrient availability. During rapid exponential growth, CodY is highly active and represses genes whose products allow adaptation to nutrient depletion. This chain is Global transcriptional regulator CodY, found in Clostridium botulinum (strain Eklund 17B / Type B).